Reading from the N-terminus, the 94-residue chain is Pyrimidine/purine nucleoside phosphorylase (94 aa).

Belongs to the nucleoside phosphorylase PpnP family.

The enzyme catalyses a purine D-ribonucleoside + phosphate = a purine nucleobase + alpha-D-ribose 1-phosphate. It carries out the reaction adenosine + phosphate = alpha-D-ribose 1-phosphate + adenine. It catalyses the reaction cytidine + phosphate = cytosine + alpha-D-ribose 1-phosphate. The catalysed reaction is guanosine + phosphate = alpha-D-ribose 1-phosphate + guanine. The enzyme catalyses inosine + phosphate = alpha-D-ribose 1-phosphate + hypoxanthine. It carries out the reaction thymidine + phosphate = 2-deoxy-alpha-D-ribose 1-phosphate + thymine. It catalyses the reaction uridine + phosphate = alpha-D-ribose 1-phosphate + uracil. The catalysed reaction is xanthosine + phosphate = alpha-D-ribose 1-phosphate + xanthine. In terms of biological role, catalyzes the phosphorolysis of diverse nucleosides, yielding D-ribose 1-phosphate and the respective free bases. Can use uridine, adenosine, guanosine, cytidine, thymidine, inosine and xanthosine as substrates. Also catalyzes the reverse reactions. The sequence is that of Pyrimidine/purine nucleoside phosphorylase from Salmonella arizonae (strain ATCC BAA-731 / CDC346-86 / RSK2980).